The primary structure comprises 784 residues: LPS-assembly protein LptD (784 aa).

Positions 1-24 (MKKRIPTLLATMIASALYSHQGLA) are cleaved as a signal peptide. Cystine bridges form between C31/C724 and C173/C725.

It belongs to the LptD family. In terms of assembly, component of the lipopolysaccharide transport and assembly complex. Interacts with LptE and LptA. Contains two intramolecular disulfide bonds.

The protein resides in the cell outer membrane. Functionally, together with LptE, is involved in the assembly of lipopolysaccharide (LPS) at the surface of the outer membrane. This Salmonella paratyphi A (strain ATCC 9150 / SARB42) protein is LPS-assembly protein LptD.